Here is a 508-residue protein sequence, read N- to C-terminus: Maturase K (508 aa).

It belongs to the intron maturase 2 family. MatK subfamily.

Its subcellular location is the plastid. The protein localises to the chloroplast. Functionally, usually encoded in the trnK tRNA gene intron. Probably assists in splicing its own and other chloroplast group II introns. The chain is Maturase K from Lupinus cosentinii (West Australian blue lupine).